We begin with the raw amino-acid sequence, 548 residues long: Natural resistance-associated macrophage protein 1 (548 aa).

Residues 1–12 (MSGDTGTPNQGG) are compositionally biased toward polar residues. Positions 1-38 (MSGDTGTPNQGGTRYGSISSPPSPGPQQAPPGGTYLSE) are disordered. The Cytoplasmic segment spans residues 1–55 (MSGDTGTPNQGGTRYGSISSPPSPGPQQAPPGGTYLSEKIPIPDTESGAFSLRKL). Residues 56 to 73 (WAFTGPGFLMSIAFLDPG) form a helical membrane-spanning segment. Residues 74-82 (NIESDLQAG) lie on the Extracellular side of the membrane. A helical membrane pass occupies residues 83-102 (AVAGFKLLWVLLWATVLGLL). The Cytoplasmic segment spans residues 103-139 (CQRLAARLGVVTGKDLGEVCHLYYPKVPRTLLWLTIE). Residues 140 to 160 (LAIVGSDMQEVIGTAIAFSLL) form a helical membrane-spanning segment. Over 161 to 164 (SAGR) the chain is Extracellular. A helical membrane pass occupies residues 165 to 184 (IPLWGGVLITIVDTFFFLFL). At 185 to 193 (DNYGLRKLE) the chain is on the cytoplasmic side. Residues 194 to 214 (AFFGFLITIMALTFGYEYVVA) form a helical membrane-spanning segment. Topologically, residues 215-237 (RPAQGALLQGLFLPSCPGCGQPE) are extracellular. Residues 238 to 256 (LLQAVGIVGAIIMPHNIYL) form a helical membrane-spanning segment. At 257–284 (HSSLVKSREVDRSRRADIREANMYFLIE) the chain is on the cytoplasmic side. A helical membrane pass occupies residues 285–304 (ATIALSVSFFINLFVMAVFG). The Extracellular portion of the chain corresponds to 305–346 (QAFYKQTNQAAFNICANSSLHDYATIFPRDNLTVAVDIYQGG). Asn-321 and Asn-335 each carry an N-linked (GlcNAc...) asparagine glycan. Residues 347-366 (VILGCLFGPAALYIWAVGLL) traverse the membrane as a helical segment. The Cytoplasmic segment spans residues 367–397 (AAGQSSTMTGTYAGQFVMEGFLKLRWSRFAR). The chain crosses the membrane as a helical span at residues 398–415 (VLLTRSCAIPPTVLLAVF). Topologically, residues 416–426 (RDLQDLSGLND) are extracellular. The helical transmembrane segment at 427–447 (LLNVLQSLLLPFAVLPILTFT) threads the bilayer. Topologically, residues 448–463 (SMPALMQEFANGLVSK) are cytoplasmic. A helical transmembrane segment spans residues 464–485 (IITSSIMVLVCAVNLYFVISYV). The Extracellular segment spans residues 486-493 (PSLPHPAY). A helical transmembrane segment spans residues 494 to 513 (FSLVALLAAAYLGLTTYLVW). The Cytoplasmic portion of the chain corresponds to 514–548 (TCLITQGATRLAHSSHQRFLYGLPGEDQEEGRTSG).

The protein belongs to the NRAMP family.

It is found in the late endosome membrane. The protein localises to the lysosome membrane. It catalyses the reaction Zn(2+)(in) + H(+)(out) = Zn(2+)(out) + H(+)(in). It carries out the reaction Fe(2+)(in) + H(+)(out) = Fe(2+)(out) + H(+)(in). The enzyme catalyses Mn(2+)(in) + H(+)(out) = Mn(2+)(out) + H(+)(in). Its function is as follows. Macrophage-specific antiporter that fluxes metal ions in either direction against a proton gradient. Localized to late endosomal lysosomal membranes, delivers bivalent cations from the cytosol into these acidic compartments where they may directly affect antimicrobial activity. Involved in iron metabolism and host natural resistance to infection with intracellular parasites. Pathogen resistance involves sequestration of Fe(2+) and Mn(2+), cofactors of both prokaryotic and eukaryotic catalases and superoxide dismutases, not only to protect the macrophage against its own generation of reactive oxygen species, but to deny the cations to the pathogen for synthesis of its protective enzymes. The polypeptide is Natural resistance-associated macrophage protein 1 (SLC11A1) (Ovis aries (Sheep)).